The sequence spans 128 residues: Large ribosomal subunit protein bL17 (128 aa).

This sequence belongs to the bacterial ribosomal protein bL17 family. As to quaternary structure, part of the 50S ribosomal subunit. Contacts protein L32.

The sequence is that of Large ribosomal subunit protein bL17 from Streptococcus sanguinis (strain SK36).